A 117-amino-acid chain; its full sequence is Large ribosomal subunit protein uL18 (117 aa).

This sequence belongs to the universal ribosomal protein uL18 family. As to quaternary structure, part of the 50S ribosomal subunit; part of the 5S rRNA/L5/L18/L25 subcomplex. Contacts the 5S and 23S rRNAs.

Functionally, this is one of the proteins that bind and probably mediate the attachment of the 5S RNA into the large ribosomal subunit, where it forms part of the central protuberance. This chain is Large ribosomal subunit protein uL18, found in Aeromonas salmonicida (strain A449).